The sequence spans 112 residues: uncharacterized protein (112 aa).

2 helical membrane passes run 44-63 and 68-90; these read VITGIVGYVFVVVYVVLHSL and LAALAMALVFFAITGEYGGKLVH.

The protein localises to the cell membrane. This is an uncharacterized protein from Archaeoglobus fulgidus (strain ATCC 49558 / DSM 4304 / JCM 9628 / NBRC 100126 / VC-16).